Reading from the N-terminus, the 317-residue chain is tRNA dimethylallyltransferase (317 aa).

14 to 21 (GPTASGKT) serves as a coordination point for ATP. Residue 16 to 21 (TASGKT) participates in substrate binding. 3 interaction with substrate tRNA regions span residues 39 to 42 (DSAL), 163 to 167 (QRIQR), and 248 to 253 (RCVGYR).

The protein belongs to the IPP transferase family. Monomer. The cofactor is Mg(2+).

It carries out the reaction adenosine(37) in tRNA + dimethylallyl diphosphate = N(6)-dimethylallyladenosine(37) in tRNA + diphosphate. Functionally, catalyzes the transfer of a dimethylallyl group onto the adenine at position 37 in tRNAs that read codons beginning with uridine, leading to the formation of N6-(dimethylallyl)adenosine (i(6)A). This chain is tRNA dimethylallyltransferase, found in Paraburkholderia phymatum (strain DSM 17167 / CIP 108236 / LMG 21445 / STM815) (Burkholderia phymatum).